Here is a 532-residue protein sequence, read N- to C-terminus: Probable cytochrome c oxidase subunit 1 (532 aa).

Helical transmembrane passes span 33 to 53 (IMYI…SLLF), 74 to 94 (VLIT…ALFG), 95 to 115 (GFGN…FPRL), 118 to 138 (ISFW…FVDG), 163 to 183 (MAIF…INLI), 200 to 220 (PLFV…MPVL), 252 to 272 (LFWF…FGIV), and 284 to 304 (IFGY…GFIV). Histidine 79 serves as a coordination point for Fe(II)-heme a. 2 residues coordinate Cu cation: histidine 258 and tyrosine 262. Histidine 307 and histidine 308 together coordinate Cu cation. The next 2 membrane-spanning stretches (helical) occupy residues 318 to 338 (ALIY…IKIF) and 355 to 375 (MLFS…GIIL). Histidine 393 lines the heme a3 pocket. 3 helical membrane-spanning segments follow: residues 394-414 (FHYT…YYWF), 431-451 (FWIT…LGLA), and 473-493 (IGAG…FYTL). Histidine 395 contacts Fe(II)-heme a.

This sequence belongs to the heme-copper respiratory oxidase family.

Its subcellular location is the cell membrane. It catalyses the reaction 4 Fe(II)-[cytochrome c] + O2 + 8 H(+)(in) = 4 Fe(III)-[cytochrome c] + 2 H2O + 4 H(+)(out). It functions in the pathway energy metabolism; oxidative phosphorylation. Cytochrome c oxidase is the component of the respiratory chain that catalyzes the reduction of oxygen to water. Subunits 1-3 form the functional core of the enzyme complex. CO I is the catalytic subunit of the enzyme. Electrons originating in cytochrome c are transferred via the copper A center of subunit 2 and heme A of subunit 1 to the bimetallic center formed by heme A3 and copper B. The chain is Probable cytochrome c oxidase subunit 1 (ctaD) from Rickettsia conorii (strain ATCC VR-613 / Malish 7).